The primary structure comprises 323 residues: Beta-ketoacyl-[acyl-carrier-protein] synthase III (323 aa).

Catalysis depends on residues Cys-113 and His-250. Residues 251–255 are ACP-binding; the sequence is QANKR. Residue Asn-280 is part of the active site.

It belongs to the thiolase-like superfamily. FabH family. Homodimer.

The protein resides in the cytoplasm. It carries out the reaction malonyl-[ACP] + acetyl-CoA + H(+) = 3-oxobutanoyl-[ACP] + CO2 + CoA. It participates in lipid metabolism; fatty acid biosynthesis. Catalyzes the condensation reaction of fatty acid synthesis by the addition to an acyl acceptor of two carbons from malonyl-ACP. Catalyzes the first condensation reaction which initiates fatty acid synthesis and may therefore play a role in governing the total rate of fatty acid production. Possesses both acetoacetyl-ACP synthase and acetyl transacylase activities. Its substrate specificity determines the biosynthesis of branched-chain and/or straight-chain of fatty acids. The chain is Beta-ketoacyl-[acyl-carrier-protein] synthase III from Chelativorans sp. (strain BNC1).